The sequence spans 237 residues: MAEKACIKRLQKEYRALCKEPVSHVVARPSPNDILEWHYVLEGSEGTPFAGGFYYGKIKFPPEYPYKPPGITMTTPNGRFMTQKKICLSMSDFHPESWNPMWSVSSILTGLLSFMMDTSPTTGSVNTTVIEKQRLAKSSLAFNCKTPAFRKLFPEYVEKYNQQQLAEQATTQLTTPESPQKSDTKVESEKTIDPTKGDSEGGLKERKKNNKQGLPAWIILLLVSVFGVVMALPLLQL.

The UBC core domain maps to Ala-5–Gln-162. Cys-87 acts as the Glycyl thioester intermediate in catalysis. The interval Gln-168–Lys-207 is disordered. Residues Gln-180–Lys-204 are compositionally biased toward basic and acidic residues. Residues Leu-214 to Leu-234 traverse the membrane as a helical segment.

It belongs to the ubiquitin-conjugating enzyme family.

It localises to the membrane. The enzyme catalyses S-ubiquitinyl-[E1 ubiquitin-activating enzyme]-L-cysteine + [E2 ubiquitin-conjugating enzyme]-L-cysteine = [E1 ubiquitin-activating enzyme]-L-cysteine + S-ubiquitinyl-[E2 ubiquitin-conjugating enzyme]-L-cysteine.. It participates in protein modification; protein ubiquitination. Its function is as follows. Accepts the ubiquitin from the E1 complex and catalyzes its covalent attachment to other proteins. This Arabidopsis thaliana (Mouse-ear cress) protein is Ubiquitin-conjugating enzyme E2 34 (UBC34).